A 178-amino-acid chain; its full sequence is Ribonuclease M5 (178 aa).

In terms of domain architecture, Toprim spans 10–103 (DGVIVCEGKT…NSTKIGVAEA (94 aa)). Mg(2+) is bound by residues E16, D62, and D64.

Belongs to the ribonuclease M5 family. The cofactor is Mg(2+).

Its subcellular location is the cytoplasm. The enzyme catalyses Endonucleolytic cleavage of RNA, removing 21 and 42 nucleotides, respectively, from the 5'- and 3'-termini of a 5S-rRNA precursor.. Required for correct processing of both the 5' and 3' ends of 5S rRNA precursor. Cleaves both sides of a double-stranded region yielding mature 5S rRNA in one step. The sequence is that of Ribonuclease M5 from Mycoplasma pneumoniae (strain ATCC 29342 / M129 / Subtype 1) (Mycoplasmoides pneumoniae).